Here is a 641-residue protein sequence, read N- to C-terminus: Fructose-1,6-bisphosphatase class 3 (641 aa).

This sequence belongs to the FBPase class 3 family. Mn(2+) is required as a cofactor.

The enzyme catalyses beta-D-fructose 1,6-bisphosphate + H2O = beta-D-fructose 6-phosphate + phosphate. Its pathway is carbohydrate biosynthesis; gluconeogenesis. The sequence is that of Fructose-1,6-bisphosphatase class 3 from Latilactobacillus sakei subsp. sakei (strain 23K) (Lactobacillus sakei subsp. sakei).